Consider the following 840-residue polypeptide: V-type proton ATPase 116 kDa subunit a 4 (840 aa).

Residues 1–390 (MVSVFRSEEM…DAYGVGSYRE (390 aa)) are Cytoplasmic-facing. A helical transmembrane segment spans residues 391–409 (INPAPYTIITFPFLFAVMF). At 410–411 (GD) the chain is on the vacuolar side. Residues 412–428 (CGHGTVMLLAALWMILN) traverse the membrane as a helical segment. At 429–443 (ERRLLSQKTDNEIWN) the chain is on the cytoplasmic side. A helical transmembrane segment spans residues 444–473 (TFFHGRYLILLMGIFSIYTGLIYNDCFSKS). At 474–538 (LNIFGSSWSV…ASNKLTFLNS (65 aa)) the chain is on the vacuolar side. Residues 539–558 (YKMKMSVILGIVQMVFGVIL) traverse the membrane as a helical segment. The Cytoplasmic segment spans residues 559 to 576 (SLFNHIYFRRTLNIILQF). The helical transmembrane segment at 577-597 (IPEMIFILCLFGYLVFMIIFK) threads the bilayer. Topologically, residues 598–642 (WCCFDVHVSQHAPSILIHFINMFLFNYSDSSNAPLYKHQQEVQSF) are vacuolar. A helical membrane pass occupies residues 643–662 (FVVMALISVPWMLLIKPFIL). Residues 663 to 727 (RASHRKSQLQ…DVFVHQAIHT (65 aa)) are Cytoplasmic-facing. The interval 675–704 (RIQEDATENIEGDSSSPSSRSGQRTSADTH) is disordered. Residues 728-752 (IEYCLGCISNTASYLRLWALSLAHA) form a helical membrane-spanning segment. At 753–773 (QLSEVLWTMVMNSGLQTRGWG) the chain is on the vacuolar side. The chain crosses the membrane as a helical span at residues 774 to 812 (GIVGVFIIFAVFAVLTVAILLIMEGLSAFLHALRLHWVE). Residues 813–840 (FQNKFYVGDGYKFSPFSFKHILDGTAEE) are Cytoplasmic-facing.

It belongs to the V-ATPase 116 kDa subunit family. As to quaternary structure, V-ATPase is a heteromultimeric enzyme made up of two complexes: the ATP-hydrolytic V1 complex and the proton translocation V0 complex. The V1 complex consists of three catalytic AB heterodimers that form a heterohexamer, three peripheral stalks each consisting of EG heterodimers, one central rotor including subunits D and F, and the regulatory subunits C and H. The proton translocation complex V0 consists of the proton transport subunit a, a ring of proteolipid subunits c9c'', rotary subunit d, subunits e and f, and the accessory subunits ATP6AP1/Ac45 and ATP6AP2/PRR. Interacts with the V1 complex V-ATPase subunit A ATP6V1A. Interacts with the V0 complex V-ATPase subunit c ATP6V0C. Expressed in adult and fetal kidney. Found in the inner ear.

The protein localises to the apical cell membrane. It is found in the basolateral cell membrane. In terms of biological role, subunit of the V0 complex of vacuolar(H+)-ATPase (V-ATPase), a multisubunit enzyme composed of a peripheral complex (V1) that hydrolyzes ATP and a membrane integral complex (V0) that translocates protons. V-ATPase is responsible for acidifying and maintaining the pH of intracellular compartments and in some cell types, is targeted to the plasma membrane, where it is responsible for acidifying the extracellular environment. Involved in normal vectorial acid transport into the urine by the kidney. The chain is V-type proton ATPase 116 kDa subunit a 4 (ATP6V0A4) from Homo sapiens (Human).